Consider the following 140-residue polypeptide: FlaA locus uncharacterized protein YlxG (140 aa).

Positions 1-21 (MTSISSEYKLPEKTNTVSTNN) are disordered.

It belongs to the FlgD family.

This chain is FlaA locus uncharacterized protein YlxG (ylxG), found in Bacillus subtilis (strain 168).